Reading from the N-terminus, the 72-residue chain is MLVYKMLWNKTILGMKSINTGNRKADTACAKLSKLVQLTNILINKEGIPFKLVGDTKRIVFRELDGDTTANK.

This is an uncharacterized protein from Dictyostelium discoideum (Social amoeba).